The sequence spans 347 residues: NADH-quinone oxidoreductase subunit H 1 (347 aa).

9 helical membrane-spanning segments follow: residues 14–34, 50–70, 83–103, 115–135, 161–181, 198–218, 258–278, 286–306, and 321–341; these read IMIG…AYVL, PNVV…KFVF, IFLL…AVIP, VGIL…IMGG, IGFV…TDIV, FLDW…ISAL, AICL…LPPV, VPGI…FAMV, and LGWK…AFVL.

It belongs to the complex I subunit 1 family. In terms of assembly, NDH-1 is composed of 14 different subunits. Subunits NuoA, H, J, K, L, M, N constitute the membrane sector of the complex.

It localises to the cell inner membrane. It catalyses the reaction a quinone + NADH + 5 H(+)(in) = a quinol + NAD(+) + 4 H(+)(out). In terms of biological role, NDH-1 shuttles electrons from NADH, via FMN and iron-sulfur (Fe-S) centers, to quinones in the respiratory chain. The immediate electron acceptor for the enzyme in this species is believed to be ubiquinone. Couples the redox reaction to proton translocation (for every two electrons transferred, four hydrogen ions are translocated across the cytoplasmic membrane), and thus conserves the redox energy in a proton gradient. This subunit may bind ubiquinone. The chain is NADH-quinone oxidoreductase subunit H 1 from Rhizobium meliloti (strain 1021) (Ensifer meliloti).